A 372-amino-acid polypeptide reads, in one-letter code: MVRLTVDLVMKNSNVLRNRKDESLARHLRRITHLNFSNKNIDEVEDLTMCRNLTVLYLYDNNINQIKNLGSNLTHLYLQNNCISCIENLSGLKRLEKLYLGGNCLTVVEGLEGLRELRELHIENQRLPPGEKLLFDPRTLHFLGISLSVLNISNNNIDELKDLAVLENLTQFVAADNQLKEIKDLEFVLSKWTKLCRMDLSGNPVCLKPKYREKVTIISKTLEILDGKEIKEMARQFLLNWKASRISKKKKNLENMTGPSLLPQLYESDNYRSLLPVYNQNFRHQLLEQPKYIVMAHTQSCNKHGQLQRSAGKRNISVIEDIKSEARGMESFSGCIPESECVGGQHGNERPGYPTNLINLWKGEKDETEGIP.

LRR repeat units lie at residues 30–51, 52–71, 72–93, 94–115, 116–137, 146–167, and 168–189; these read RITH…TMCR, NLTV…NLGS, NLTH…SGLK, RLEK…EGLR, ELRE…LFDP, SLSV…AVLE, and NLTQ…EFVL. In terms of domain architecture, LRRCT spans 203-241; the sequence is NPVCLKPKYREKVTIISKTLEILDGKEIKEMARQFLLNW.

The protein localises to the cytoplasm. The protein resides in the cytoskeleton. It is found in the microtubule organizing center. It localises to the centrosome. Functionally, may regulate phosphatase activity of protein phosphatase 1 (PP1) complexes. The sequence is that of Protein phosphatase 1 regulatory subunit 42 (ppp1r42) from Xenopus laevis (African clawed frog).